A 454-amino-acid chain; its full sequence is Bifunctional protein GlmU (454 aa).

Residues 1-228 (MTLPLHVVIL…PQHVEGANDP (228 aa)) are pyrophosphorylase. Residues 10-13 (LAAG), Lys24, Gln76, 81-82 (GT), 103-105 (YGD), Gly138, Glu153, Asn168, and Asn226 contribute to the UDP-N-acetyl-alpha-D-glucosamine site. Asp105 serves as a coordination point for Mg(2+). Asn226 contacts Mg(2+). The segment at 229-249 (WQLAQLERAWQLRAARTLCLQ) is linker. The segment at 250 to 454 (GVRMADPARV…IEGWKRPTKK (205 aa)) is N-acetyltransferase. Arg332 and Lys350 together coordinate UDP-N-acetyl-alpha-D-glucosamine. His362 functions as the Proton acceptor in the catalytic mechanism. The UDP-N-acetyl-alpha-D-glucosamine site is built by Tyr365 and Asn376. Acetyl-CoA is bound by residues Ala379, 385-386 (NY), Ser404, Ala422, and Arg439.

This sequence in the N-terminal section; belongs to the N-acetylglucosamine-1-phosphate uridyltransferase family. In the C-terminal section; belongs to the transferase hexapeptide repeat family. In terms of assembly, homotrimer. Mg(2+) serves as cofactor.

The protein resides in the cytoplasm. The enzyme catalyses alpha-D-glucosamine 1-phosphate + acetyl-CoA = N-acetyl-alpha-D-glucosamine 1-phosphate + CoA + H(+). It catalyses the reaction N-acetyl-alpha-D-glucosamine 1-phosphate + UTP + H(+) = UDP-N-acetyl-alpha-D-glucosamine + diphosphate. The protein operates within nucleotide-sugar biosynthesis; UDP-N-acetyl-alpha-D-glucosamine biosynthesis; N-acetyl-alpha-D-glucosamine 1-phosphate from alpha-D-glucosamine 6-phosphate (route II): step 2/2. It functions in the pathway nucleotide-sugar biosynthesis; UDP-N-acetyl-alpha-D-glucosamine biosynthesis; UDP-N-acetyl-alpha-D-glucosamine from N-acetyl-alpha-D-glucosamine 1-phosphate: step 1/1. Its pathway is bacterial outer membrane biogenesis; LPS lipid A biosynthesis. Catalyzes the last two sequential reactions in the de novo biosynthetic pathway for UDP-N-acetylglucosamine (UDP-GlcNAc). The C-terminal domain catalyzes the transfer of acetyl group from acetyl coenzyme A to glucosamine-1-phosphate (GlcN-1-P) to produce N-acetylglucosamine-1-phosphate (GlcNAc-1-P), which is converted into UDP-GlcNAc by the transfer of uridine 5-monophosphate (from uridine 5-triphosphate), a reaction catalyzed by the N-terminal domain. The sequence is that of Bifunctional protein GlmU from Xanthomonas euvesicatoria pv. vesicatoria (strain 85-10) (Xanthomonas campestris pv. vesicatoria).